A 226-amino-acid polypeptide reads, in one-letter code: Transcription factor bHLH115 (226 aa).

The bHLH domain maps to 66-117 (TGSNSKACREKQRRDRLNDKFTELSSVLEPGRTPKTDKVAIINDAIRMVNQA).

Homodimer. Interacts with BTS and BHLH47/PYE.

The protein resides in the nucleus. The protein is Transcription factor bHLH115 (BHLH115) of Arabidopsis thaliana (Mouse-ear cress).